Here is a 904-residue protein sequence, read N- to C-terminus: Protein translocase subunit SecA (904 aa).

ATP-binding positions include glutamine 89, 107 to 111, and aspartate 502; that span reads GEGKT. Zn(2+) is bound by residues cysteine 886, cysteine 888, cysteine 897, and histidine 898.

This sequence belongs to the SecA family. In terms of assembly, monomer and homodimer. Part of the essential Sec protein translocation apparatus which comprises SecA, SecYEG and auxiliary proteins SecDF-YajC and YidC. Zn(2+) serves as cofactor.

The protein localises to the cell inner membrane. It is found in the cytoplasm. The catalysed reaction is ATP + H2O + cellular proteinSide 1 = ADP + phosphate + cellular proteinSide 2.. In terms of biological role, part of the Sec protein translocase complex. Interacts with the SecYEG preprotein conducting channel. Has a central role in coupling the hydrolysis of ATP to the transfer of proteins into and across the cell membrane, serving both as a receptor for the preprotein-SecB complex and as an ATP-driven molecular motor driving the stepwise translocation of polypeptide chains across the membrane. In Rhizobium etli (strain CIAT 652), this protein is Protein translocase subunit SecA.